An 86-amino-acid chain; its full sequence is RNA-binding protein Hfq (86 aa).

Residues 9–68 (DPYLNVLRKERIPVSIYLVNGIKLQGQVESFDQFVVLLKNTVSQMVYKHAISTVVPSRPV) form the Sm domain.

It belongs to the Hfq family. Homohexamer.

Functionally, RNA chaperone that binds small regulatory RNA (sRNAs) and mRNAs to facilitate mRNA translational regulation in response to envelope stress, environmental stress and changes in metabolite concentrations. Also binds with high specificity to tRNAs. The protein is RNA-binding protein Hfq of Saccharophagus degradans (strain 2-40 / ATCC 43961 / DSM 17024).